The primary structure comprises 323 residues: MAVDKLPDFISGLRFMVAAKKHLVYFYSMKESGSPTSEQIEIERQTSLLKNIVERSYLQERVSCYVLKNIPQEGLPTYNDQTHTGIEIIIIPQVHTLTKGDQNVLVRMMMASQVSRPVRLFIGMIPWDTTKESAMSGDIELALSSRITSEDWLKHKFWFACYEPDENEVFSPLIGALPESLEKAQYTDVHANRSIHRYILDVMIHLRMHKLLDTTKGGGIHTSALRDVLALSQLLALYRFNKAFVTPEHVKLACIWYFPLHVEFLKGSAMDTSVLYGSRPELVDGLLKCIADVKLSNTVETENPLFLETIVVQDVLNKVVPPV.

The protein belongs to the MTC2 family.

In terms of biological role, may be involved in telomere capping. This chain is Maintenance of telomere capping protein 2 (MTC2), found in Zygosaccharomyces rouxii (strain ATCC 2623 / CBS 732 / NBRC 1130 / NCYC 568 / NRRL Y-229).